A 525-amino-acid chain; its full sequence is Peptide chain release factor 3 (525 aa).

Residues 11–279 form the tr-type G domain; sequence NKRRTFAIIS…TYLQFAPAPS (269 aa). GTP contacts are provided by residues 20-27, 88-92, and 142-145; these read SHPDAGKT, DTPGH, and NKFD.

It belongs to the TRAFAC class translation factor GTPase superfamily. Classic translation factor GTPase family. PrfC subfamily.

It is found in the cytoplasm. Functionally, increases the formation of ribosomal termination complexes and stimulates activities of RF-1 and RF-2. It binds guanine nucleotides and has strong preference for UGA stop codons. It may interact directly with the ribosome. The stimulation of RF-1 and RF-2 is significantly reduced by GTP and GDP, but not by GMP. This chain is Peptide chain release factor 3, found in Limosilactobacillus reuteri (strain DSM 20016) (Lactobacillus reuteri).